Here is a 261-residue protein sequence, read N- to C-terminus: Hydroxyethylthiazole kinase (261 aa).

Met40 is a binding site for substrate. ATP is bound by residues Lys116 and Thr162. Gly189 provides a ligand contact to substrate.

The protein belongs to the Thz kinase family. Mg(2+) serves as cofactor.

It catalyses the reaction 5-(2-hydroxyethyl)-4-methylthiazole + ATP = 4-methyl-5-(2-phosphooxyethyl)-thiazole + ADP + H(+). Its pathway is cofactor biosynthesis; thiamine diphosphate biosynthesis; 4-methyl-5-(2-phosphoethyl)-thiazole from 5-(2-hydroxyethyl)-4-methylthiazole: step 1/1. Catalyzes the phosphorylation of the hydroxyl group of 4-methyl-5-beta-hydroxyethylthiazole (THZ). The polypeptide is Hydroxyethylthiazole kinase (Methanosarcina mazei (strain ATCC BAA-159 / DSM 3647 / Goe1 / Go1 / JCM 11833 / OCM 88) (Methanosarcina frisia)).